A 102-amino-acid chain; its full sequence is Small ribosomal subunit protein uS10 (102 aa).

This sequence belongs to the universal ribosomal protein uS10 family. In terms of assembly, part of the 30S ribosomal subunit.

Functionally, involved in the binding of tRNA to the ribosomes. The chain is Small ribosomal subunit protein uS10 from Methanosarcina mazei (strain ATCC BAA-159 / DSM 3647 / Goe1 / Go1 / JCM 11833 / OCM 88) (Methanosarcina frisia).